The following is a 34-amino-acid chain: Mu-theraphotoxin-CCy1a (34 aa).

3 disulfides stabilise this stretch: C3/C18, C10/C23, and C17/C30.

This sequence belongs to the neurotoxin 10 (Hwtx-1) family. 14 (Hntx-1) subfamily. In terms of tissue distribution, expressed by the venom gland.

Its subcellular location is the secreted. Functionally, voltage-gated sodium channel Nav1.7/SCN9A inhibitor. This Chromatopelma cyaneopubescens (Greenbottle blue tarantula) protein is Mu-theraphotoxin-CCy1a.